A 309-amino-acid polypeptide reads, in one-letter code: Eugenol synthase 2 (309 aa).

NADP(+) contacts are provided by residues 13–16, 35–45, Arg-36, 86–88, 111–113, Lys-134, and 154–156; these read TGYI, VRETTVSDPVK, FMQ, SEF, and NCF. Lys-134 functions as the Proton donor/acceptor in the catalytic mechanism.

Belongs to the NmrA-type oxidoreductase family. Mostly expressed in petals, and, to a lower extent, in sepals, stamens and pistils.

It catalyses the reaction eugenol + a carboxylate + NADP(+) = a coniferyl ester + NADPH. The catalysed reaction is eugenol + acetate + NADP(+) = (E)-coniferyl acetate + NADPH. The protein operates within aromatic compound metabolism; phenylpropanoid biosynthesis. Its function is as follows. Catalyzes the synthesis of the phenylpropene eugenol from coniferyl acetate. Phenylpropenes are produced by plants as defense compounds with antimicrobial and antianimal properties, or as floral attractants of pollinators. This Clarkia breweri (Fairy fans) protein is Eugenol synthase 2.